Here is a 644-residue protein sequence, read N- to C-terminus: Acetolactate synthase 1, chloroplastic (644 aa).

Residues Met1–Arg43 constitute a chloroplast transit peptide. The tract at residues Val47–Pro67 is disordered. The span at Val50–Pro61 shows a compositional bias: pro residues. Glu118 contacts thiamine diphosphate. The cysteines at positions 138 and 284 are disulfide-linked. Residues Arg220, His326 to Arg347, and Asp369 to Asp388 each bind FAD. Residues Gln461–His541 are thiamine pyrophosphate binding. Residues Asp512 and Asn539 each contribute to the Mg(2+) site.

It belongs to the TPP enzyme family. Mg(2+) serves as cofactor. Requires thiamine diphosphate as cofactor.

The protein localises to the plastid. The protein resides in the chloroplast. It carries out the reaction 2 pyruvate + H(+) = (2S)-2-acetolactate + CO2. It functions in the pathway amino-acid biosynthesis; L-isoleucine biosynthesis; L-isoleucine from 2-oxobutanoate: step 1/4. Its pathway is amino-acid biosynthesis; L-valine biosynthesis; L-valine from pyruvate: step 1/4. This chain is Acetolactate synthase 1, chloroplastic (ALS1), found in Oryza sativa subsp. japonica (Rice).